We begin with the raw amino-acid sequence, 384 residues long: Succinyl-diaminopimelate desuccinylase (384 aa).

H75 provides a ligand contact to Zn(2+). The active site involves D77. D108 contacts Zn(2+). Residue E142 is the Proton acceptor of the active site. Zn(2+) is bound by residues E143, E171, and H357.

This sequence belongs to the peptidase M20A family. DapE subfamily. In terms of assembly, homodimer. Zn(2+) serves as cofactor. It depends on Co(2+) as a cofactor.

The catalysed reaction is N-succinyl-(2S,6S)-2,6-diaminopimelate + H2O = (2S,6S)-2,6-diaminopimelate + succinate. The protein operates within amino-acid biosynthesis; L-lysine biosynthesis via DAP pathway; LL-2,6-diaminopimelate from (S)-tetrahydrodipicolinate (succinylase route): step 3/3. Functionally, catalyzes the hydrolysis of N-succinyl-L,L-diaminopimelic acid (SDAP), forming succinate and LL-2,6-diaminopimelate (DAP), an intermediate involved in the bacterial biosynthesis of lysine and meso-diaminopimelic acid, an essential component of bacterial cell walls. The protein is Succinyl-diaminopimelate desuccinylase of Shewanella oneidensis (strain ATCC 700550 / JCM 31522 / CIP 106686 / LMG 19005 / NCIMB 14063 / MR-1).